The chain runs to 128 residues: C-C motif chemokine 28 (128 aa).

An N-terminal signal peptide occupies residues 1 to 24 (MQQTGLTLALVALAVCVALPSSEA). Cystine bridges form between Cys32–Cys60 and Cys33–Cys75. A disordered region spans residues 89-128 (EQAAKKNTKGNICHKKQAGKRKSKGAHQEKPEIHSHKSPY). Residues 94-113 (KNTKGNICHKKQAGKRKSKG) show a composition bias toward basic residues. The span at 114 to 128 (AHQEKPEIHSHKSPY) shows a compositional bias: basic and acidic residues.

Belongs to the intercrine beta (chemokine CC) family.

The protein localises to the secreted. Its function is as follows. Chemotactic activity for resting CD4, CD8 T-cells and eosinophils. Binds to CCR3 and CCR10 and induces calcium mobilization in a dose-dependent manner. The polypeptide is C-C motif chemokine 28 (CCL28) (Canis lupus familiaris (Dog)).